The sequence spans 37 residues: Translationally-controlled tumor protein homolog (37 aa).

A TCTP domain is found at 1–37; that stretch reads MKIFRDILTNAEVVXDNDKPMDVLDEIVYAXQGRYIE.

The protein belongs to the TCTP family. As to quaternary structure, monomer.

Its subcellular location is the cytoplasm. Binds calcium; exact function not known. The protein is Translationally-controlled tumor protein homolog of Trypanosoma brucei brucei.